We begin with the raw amino-acid sequence, 180 residues long: Sperm protein associated with the nucleus on the X chromosome N2 (180 aa).

Disordered stretches follow at residues 1–46 and 64–180; these read MEQP…KTKT and NSNQ…GGED. Positions 10–26 are enriched in basic and acidic residues; the sequence is GEKRKSPCESNNKKNDE. Positions 82-169 are enriched in acidic residues; the sequence is QEEEDEGLDS…SSQEDEDLDS (88 aa). Residues 170–180 are compositionally biased toward low complexity; the sequence is SEGSSQEGGED.

The protein belongs to the SPAN-X family.

This Homo sapiens (Human) protein is Sperm protein associated with the nucleus on the X chromosome N2 (SPANXN2).